The primary structure comprises 405 residues: L-carnitine CoA-transferase (405 aa).

CoA contacts are provided by lysine 97 and arginine 104. Aspartate 169 serves as the catalytic Nucleophile.

This sequence belongs to the CoA-transferase III family. CaiB subfamily. Homodimer.

The protein localises to the cytoplasm. It catalyses the reaction crotonobetainyl-CoA + (R)-carnitine = crotonobetaine + (R)-carnitinyl-CoA. The catalysed reaction is 4-(trimethylamino)butanoyl-CoA + (R)-carnitine = (R)-carnitinyl-CoA + 4-(trimethylamino)butanoate. The protein operates within amine and polyamine metabolism; carnitine metabolism. Functionally, catalyzes the reversible transfer of the CoA moiety from gamma-butyrobetainyl-CoA to L-carnitine to generate L-carnitinyl-CoA and gamma-butyrobetaine. Is also able to catalyze the reversible transfer of the CoA moiety from gamma-butyrobetainyl-CoA or L-carnitinyl-CoA to crotonobetaine to generate crotonobetainyl-CoA. This chain is L-carnitine CoA-transferase, found in Escherichia coli O17:K52:H18 (strain UMN026 / ExPEC).